Here is a 1361-residue protein sequence, read N- to C-terminus: uncharacterized protein (1361 aa).

The protein belongs to the IIV-6 261R/396L/443R family.

This is an uncharacterized protein from Invertebrate iridescent virus 6 (IIV-6).